The sequence spans 67 residues: Protein SlyX homolog (67 aa).

The span at 48–60 (TSAPSTAAESNPQ) shows a compositional bias: polar residues. The tract at residues 48-67 (TSAPSTAAESNPQHEIPPHY) is disordered.

The protein belongs to the SlyX family.

This is Protein SlyX homolog from Cupriavidus pinatubonensis (strain JMP 134 / LMG 1197) (Cupriavidus necator (strain JMP 134)).